Here is a 159-residue protein sequence, read N- to C-terminus: Cyclic pyranopterin monophosphate synthase (159 aa).

Substrate contacts are provided by residues 75 to 77 (LCH) and 113 to 114 (ME). Asp-128 is an active-site residue.

The protein belongs to the MoaC family. Homohexamer; trimer of dimers.

It catalyses the reaction (8S)-3',8-cyclo-7,8-dihydroguanosine 5'-triphosphate = cyclic pyranopterin phosphate + diphosphate. Its pathway is cofactor biosynthesis; molybdopterin biosynthesis. In terms of biological role, catalyzes the conversion of (8S)-3',8-cyclo-7,8-dihydroguanosine 5'-triphosphate to cyclic pyranopterin monophosphate (cPMP). The polypeptide is Cyclic pyranopterin monophosphate synthase (Heliobacterium modesticaldum (strain ATCC 51547 / Ice1)).